A 275-amino-acid chain; its full sequence is Shikimate dehydrogenase (NADP(+)) (275 aa).

Shikimate-binding positions include 15 to 17 (SKS) and T62. K66 (proton acceptor) is an active-site residue. E78 provides a ligand contact to NADP(+). N87 and D102 together coordinate shikimate. Residues 127 to 131 (GAGGA), 151 to 156 (NRTPQK), and M215 contribute to the NADP(+) site. Y217 lines the shikimate pocket. G239 is a binding site for NADP(+).

It belongs to the shikimate dehydrogenase family. As to quaternary structure, homodimer.

The enzyme catalyses shikimate + NADP(+) = 3-dehydroshikimate + NADPH + H(+). Its pathway is metabolic intermediate biosynthesis; chorismate biosynthesis; chorismate from D-erythrose 4-phosphate and phosphoenolpyruvate: step 4/7. Its function is as follows. Involved in the biosynthesis of the chorismate, which leads to the biosynthesis of aromatic amino acids. Catalyzes the reversible NADPH linked reduction of 3-dehydroshikimate (DHSA) to yield shikimate (SA). The polypeptide is Shikimate dehydrogenase (NADP(+)) (Nitrosospira multiformis (strain ATCC 25196 / NCIMB 11849 / C 71)).